Here is a 234-residue protein sequence, read N- to C-terminus: Chromatin remodeling protein EBS (234 aa).

The 116-residue stretch at 29 to 144 (KVVRAGDCVL…AATGAFTPDR (116 aa)) folds into the BAH domain. The segment at 146 to 197 (AVYCKCEMPYNPDDLMVQCEGCKDWYHPACVGMTIEEAKKLDHFVCAECSSD) adopts a PHD-type zinc-finger fold.

The protein belongs to the SHL1/EBS protein family. Recognizes di- and trimethylated histone H3 at lysine 4 (H3K4me2 and H3K4me3). Interacts with HDA6. Expressed ubiquitously, with higher levels in floral buds.

The protein localises to the nucleus. Chromatin remodeling factor that binds to methylated histone (e.g. H3K4me2/3) to prevent their acetylation (e.g. H3K9K14Ac), likely by recruiting histone deacetylase (HDAC) complexes, and thus regulating the transcription of target genes. Negative regulator in developmental processes in a gibberellic acid- (GA-) dependent manner, such as germination, flowering induction, and flower organ specification, probably by modulating developmental gene expression. Involved in the chromatin-mediated repression of floral initiation and controls genes regulating flowering. Negatively regulates the expression of the floral integrator FT epigenetically, by preventing high levels of H3 acetylation, thus maintaining an inactive chromatin conformation at FT locus. The protein is Chromatin remodeling protein EBS of Arabidopsis thaliana (Mouse-ear cress).